The sequence spans 229 residues: Vitellogenin (229 aa).

In terms of domain architecture, VWFD spans 1 to 136 (IVMLKNDNVE…SWILAAESCR (136 aa)). N-linked (GlcNAc...) asparagine glycosylation is present at asparagine 198.

Expressed in liver, ovary and, to a lesser extent, in muscle, intestine, skin, kidney and heart.

Its function is as follows. Precursor of the egg-yolk proteins that are sources of nutrients during early development of oviparous organisms. Probably binds tetrodotoxin in the ovary. This Takifugu pardalis (Panther puffer) protein is Vitellogenin.